The following is a 170-amino-acid chain: Peptide deformylase (170 aa).

Residues Cys-91 and His-133 each contribute to the Fe cation site. Residue Glu-134 is part of the active site. Fe cation is bound at residue His-137.

It belongs to the polypeptide deformylase family. Fe(2+) is required as a cofactor.

It catalyses the reaction N-terminal N-formyl-L-methionyl-[peptide] + H2O = N-terminal L-methionyl-[peptide] + formate. In terms of biological role, removes the formyl group from the N-terminal Met of newly synthesized proteins. Requires at least a dipeptide for an efficient rate of reaction. N-terminal L-methionine is a prerequisite for activity but the enzyme has broad specificity at other positions. The chain is Peptide deformylase from Aeromonas salmonicida (strain A449).